We begin with the raw amino-acid sequence, 209 residues long: Prolactin (209 aa).

An N-terminal signal peptide occupies residues 1 to 24; it reads MAQRFKGRSLFLTALLCLASQGYA. Cystine bridges form between Cys70/Cys184 and Cys201/Cys209.

The protein belongs to the somatotropin/prolactin family.

It localises to the secreted. This is Prolactin (prl) from Anguilla anguilla (European freshwater eel).